Consider the following 552-residue polypeptide: uncharacterized protein (552 aa).

29 to 36 provides a ligand contact to ATP; it reads GENAWGKS. A Toprim domain is found at 379–469; sequence RCWLLVEGET…AEREHLTALP (91 aa).

This is an uncharacterized protein from Escherichia coli (strain K12).